The chain runs to 617 residues: Vacuolar protein sorting-associated protein 33B (617 aa).

Residue A2 is modified to N-acetylalanine.

This sequence belongs to the STXBP/unc-18/SEC1 family. Interacts with RAB11A and VIPAS39. Associates with adaptor protein complex 3 (AP-3), clathrin:AP-3 and clathrin:HGS complexes. Phosphorylated on tyrosine residues. As to expression, ubiquitous.

Its subcellular location is the late endosome membrane. It is found in the lysosome membrane. It localises to the early endosome. The protein localises to the cytoplasmic vesicle. The protein resides in the clathrin-coated vesicle. Its subcellular location is the recycling endosome. Its function is as follows. May play a role in vesicle-mediated protein trafficking to lysosomal compartments and in membrane docking/fusion reactions of late endosomes/lysosomes. Mediates phagolysosomal fusion in macrophages. Proposed to be involved in endosomal maturation implicating VIPAS39. In epithelial cells, the VPS33B:VIPAS39 complex may play a role in the apical recycling pathway and in the maintenance of the apical-basolateral polarity. Seems to be involved in the sorting of specific cargos from the trans-Golgi network to alpha-granule-destined multivesicular bodies (MVBs) promoting MVBs maturation in megakaryocytes. The chain is Vacuolar protein sorting-associated protein 33B (Vps33b) from Rattus norvegicus (Rat).